The chain runs to 353 residues: Glutamine synthetase cytosolic isozyme 1-5 (353 aa).

Position 2 is an N-acetylthreonine (Thr2). Ser3 carries the phosphoserine modification. Positions 19–99 (IIAEYIWIGG…VMCDAYRPAG (81 aa)) constitute a GS beta-grasp domain. Residues 106–353 (NRHKAVKIFD…TSMIAETTIL (248 aa)) enclose the GS catalytic domain.

This sequence belongs to the glutamine synthetase family. Homooctamer. As to expression, not expressed in roots.

It is found in the cytoplasm. The catalysed reaction is L-glutamate + NH4(+) + ATP = L-glutamine + ADP + phosphate + H(+). This chain is Glutamine synthetase cytosolic isozyme 1-5 (GLN1-5), found in Arabidopsis thaliana (Mouse-ear cress).